The following is a 249-amino-acid chain: Serine acetyltransferase (249 aa).

This sequence belongs to the transferase hexapeptide repeat family.

The protein resides in the cytoplasm. The catalysed reaction is L-serine + acetyl-CoA = O-acetyl-L-serine + CoA. It participates in amino-acid biosynthesis; L-cysteine biosynthesis; L-cysteine from L-serine: step 1/2. This chain is Serine acetyltransferase (cysE), found in Synechocystis sp. (strain ATCC 27184 / PCC 6803 / Kazusa).